Here is a 179-residue protein sequence, read N- to C-terminus: Ubiquitin-conjugating enzyme E2 C (179 aa).

The segment at 1-31 (MASQNVDPAAASSVASRKGQESGTSAARGSV) is disordered. The 150-residue stretch at 30 to 179 (SVGKRLQQEL…YQKQVREKEI (150 aa)) folds into the UBC core domain. Cys-114 acts as the Glycyl thioester intermediate in catalysis.

Belongs to the ubiquitin-conjugating enzyme family. Component of the APC/C complex. Autoubiquitinated by the APC/C complex, leading to its degradation by the proteasome.

It carries out the reaction S-ubiquitinyl-[E1 ubiquitin-activating enzyme]-L-cysteine + [E2 ubiquitin-conjugating enzyme]-L-cysteine = [E1 ubiquitin-activating enzyme]-L-cysteine + S-ubiquitinyl-[E2 ubiquitin-conjugating enzyme]-L-cysteine.. The enzyme catalyses S-ubiquitinyl-[E1 ubiquitin-activating enzyme]-L-cysteine + [acceptor protein]-L-lysine = [E1 ubiquitin-activating enzyme]-L-cysteine + N(6)-monoubiquitinyl-[acceptor protein]-L-lysine.. Its pathway is protein modification; protein ubiquitination. Functionally, catalyzes the covalent attachment of ubiquitin to other proteins. Acts as an essential factor of the anaphase promoting complex/cyclosome (APC/C), a cell cycle-regulated ubiquitin ligase that controls progression through mitosis. Acts by initiating 'Lys-11'-linked polyubiquitin chains on APC/C substrates, leading to the degradation of APC/C substrates by the proteasome and promoting mitotic exit. This Xenopus laevis (African clawed frog) protein is Ubiquitin-conjugating enzyme E2 C (ube2c).